Reading from the N-terminus, the 382-residue chain is Beta-1,4-galactosyltransferase 6 (382 aa).

Residues 1–14 (MSVLRRMMRVSNRS) are Cytoplasmic-facing. A helical; Signal-anchor for type II membrane protein membrane pass occupies residues 15–35 (LLAFIFFFSLSSSCLYFIYVA). Residues 36–382 (PGIANTYLFM…MPELAPIEDY (347 aa)) lie on the Lumenal side of the membrane. Asparagine 71, asparagine 75, asparagine 83, asparagine 84, asparagine 99, and asparagine 122 each carry an N-linked (GlcNAc...) asparagine glycan. An intrachain disulfide couples cysteine 108 to cysteine 152. Residues 163–167 (PFRNR), 202–204 (FNR), 229–230 (VD), tyrosine 258, and tryptophan 290 contribute to the UDP-alpha-D-galactose site. Cysteines 223 and 242 form a disulfide. Aspartate 230 lines the Mn(2+) pocket. An N-acetyl-D-glucosamine-binding site is contributed by 292–295 (GEDD). A glycan (N-linked (GlcNAc...) asparagine) is linked at asparagine 307. Histidine 323 lines the Mn(2+) pocket. Position 323-324 (323-324 (HH)) interacts with UDP-alpha-D-galactose. Residue arginine 334 participates in N-acetyl-D-glucosamine binding. N-linked (GlcNAc...) asparagine glycosylation occurs at asparagine 367.

Belongs to the glycosyltransferase 7 family. Mn(2+) is required as a cofactor. The cofactor is Mg(2+). As to expression, high expression in brain and adrenal gland, lower in liver, lung, colon and peripheral white blood cells.

Its subcellular location is the golgi apparatus. The protein resides in the golgi stack membrane. The catalysed reaction is a beta-D-glucosyl-(1&lt;-&gt;1')-N-acylsphing-4-enine + UDP-alpha-D-galactose = a beta-D-Gal-(1-&gt;4)-beta-D-Glc-(1&lt;-&gt;1)-Cer(d18:1(4E)) + UDP + H(+). It functions in the pathway protein modification; protein glycosylation. It participates in sphingolipid metabolism. Its activity is regulated as follows. Inhibited by EDTA. Functionally, catalyzes the synthesis of lactosylceramide (LacCer) via the transfer of galactose from UDP-galactose to glucosylceramide (GlcCer). LacCer is the starting point in the biosynthesis of all gangliosides (membrane-bound glycosphingolipids) which play pivotal roles in the CNS including neuronal maturation and axonal and myelin formation. The sequence is that of Beta-1,4-galactosyltransferase 6 from Homo sapiens (Human).